The chain runs to 523 residues: Asparagine--tRNA ligase (523 aa).

The tract at residues 329-350 (SARGDTPLAARSTARTPPVRTP) is disordered.

The protein belongs to the class-II aminoacyl-tRNA synthetase family. Homodimer.

It localises to the cytoplasm. It carries out the reaction tRNA(Asn) + L-asparagine + ATP = L-asparaginyl-tRNA(Asn) + AMP + diphosphate + H(+). The protein is Asparagine--tRNA ligase of Treponema pallidum (strain Nichols).